We begin with the raw amino-acid sequence, 179 residues long: Archaemetzincin (179 aa).

His-128 serves as a coordination point for Zn(2+). Glu-129 functions as the Proton acceptor in the catalytic mechanism. 6 residues coordinate Zn(2+): His-132, His-138, Cys-139, Cys-144, Cys-163, and Cys-166.

Belongs to the peptidase M54 family. Monomer. Requires Zn(2+) as cofactor.

Probable zinc metalloprotease whose natural substrate is unknown. The chain is Archaemetzincin from Methanocaldococcus jannaschii (strain ATCC 43067 / DSM 2661 / JAL-1 / JCM 10045 / NBRC 100440) (Methanococcus jannaschii).